A 1283-amino-acid chain; its full sequence is Oxysterol-binding protein homolog 2 (1283 aa).

S2 bears the N-acetylserine mark. A Phosphoserine modification is found at S7. ANK repeat units follow at residues 106–134 (NGNT…SIND) and 206–235 (TGTT…EATV). The PH domain occupies 289–386 (PPTYKGFLKK…WVNAIQSAIR (98 aa)). Phosphoserine is present on residues S422, S445, S451, S455, S458, S459, and S486. Position 488 is a phosphothreonine (T488). Polar residues-rich tracts occupy residues 504–518 (SNTL…SGSG) and 530–551 (ANLS…NNYI). 2 disordered regions span residues 504-571 (SNTL…LGIN) and 702-721 (TAGN…DTTA). A phosphoserine mark is found at S512 and S515. Over residues 554-568 (FEGDEANSDDEEEDL) the composition is skewed to acidic residues. Over residues 707-716 (ESLENDKEQE) the composition is skewed to basic and acidic residues. A Phosphoserine modification is found at S717. An FFAT motif is present at residues 745-751 (EFYDAAE). Positions 767–834 (STAAAPKHAP…SLKNFKAEDK (68 aa)) are disordered. T783 bears the Phosphothreonine mark. S787 bears the Phosphoserine mark. Basic and acidic residues-rich tracts occupy residues 791–810 (QDEK…KFEK) and 818–834 (DEPK…AEDK). S825 and S1151 each carry phosphoserine. Residues 897–1268 (SLWAVLKSMV…KYWRYTGKYW (372 aa)) are OSBP-related domain (ORD).

This sequence belongs to the OSBP family. As to quaternary structure, interacts with SCS2.

It is found in the cell membrane. The protein resides in the endoplasmic reticulum membrane. Lipid transport protein (LTP) involved in non-vesicular transfer of lipids between membranes. Functions in phosphoinositide-coupled directional transport of various lipids by carrying the lipid molecule in a hydrophobic pocket and transferring it between membranes through the cytosol. Involved in maintenance of intracellular sterol distribution and homeostasis. Binds and transports sterol. Plays a role in the positive regulation of vesicular transport of ceramide from the ER to the Golgi, negatively regulating COPII-mediated ER export of cargos. The chain is Oxysterol-binding protein homolog 2 from Saccharomyces cerevisiae (strain ATCC 204508 / S288c) (Baker's yeast).